Consider the following 264-residue polypeptide: Tryptophan synthase alpha chain (264 aa).

Residues Glu-49 and Asp-60 each act as proton acceptor in the active site.

This sequence belongs to the TrpA family. In terms of assembly, tetramer of two alpha and two beta chains.

The catalysed reaction is (1S,2R)-1-C-(indol-3-yl)glycerol 3-phosphate + L-serine = D-glyceraldehyde 3-phosphate + L-tryptophan + H2O. The protein operates within amino-acid biosynthesis; L-tryptophan biosynthesis; L-tryptophan from chorismate: step 5/5. Functionally, the alpha subunit is responsible for the aldol cleavage of indoleglycerol phosphate to indole and glyceraldehyde 3-phosphate. This Picosynechococcus sp. (strain ATCC 27264 / PCC 7002 / PR-6) (Agmenellum quadruplicatum) protein is Tryptophan synthase alpha chain.